The primary structure comprises 943 residues: Isoleucine--tRNA ligase (943 aa).

The 'HIGH' region signature appears at 59-69 (PYANGQIHLGH). E577 is a binding site for L-isoleucyl-5'-AMP. Positions 618–622 (KMSKS) match the 'KMSKS' region motif. K621 provides a ligand contact to ATP. Zn(2+) is bound by residues C906, C909, C926, and C929.

The protein belongs to the class-I aminoacyl-tRNA synthetase family. IleS type 1 subfamily. Monomer. Zn(2+) is required as a cofactor.

The protein localises to the cytoplasm. The catalysed reaction is tRNA(Ile) + L-isoleucine + ATP = L-isoleucyl-tRNA(Ile) + AMP + diphosphate. Functionally, catalyzes the attachment of isoleucine to tRNA(Ile). As IleRS can inadvertently accommodate and process structurally similar amino acids such as valine, to avoid such errors it has two additional distinct tRNA(Ile)-dependent editing activities. One activity is designated as 'pretransfer' editing and involves the hydrolysis of activated Val-AMP. The other activity is designated 'posttransfer' editing and involves deacylation of mischarged Val-tRNA(Ile). The protein is Isoleucine--tRNA ligase of Xanthomonas campestris pv. campestris (strain B100).